Reading from the N-terminus, the 467-residue chain is tRNA-2-methylthio-N(6)-dimethylallyladenosine synthase (467 aa).

Positions 1-20 (MSDDTTQIEPAMAQETSPRA) are disordered. Positions 23 to 143 (RKVFVKTYGC…LPNALARVRG (121 aa)) constitute an MTTase N-terminal domain. Residues cysteine 32, cysteine 68, cysteine 106, cysteine 184, cysteine 188, and cysteine 191 each contribute to the [4Fe-4S] cluster site. The Radical SAM core domain maps to 170–402 (RKRGVSAFLT…QALLSAQQYA (233 aa)). The region spanning 405–467 (DSMIGRKMDV…TNSLIAQKLA (63 aa)) is the TRAM domain.

Belongs to the methylthiotransferase family. MiaB subfamily. In terms of assembly, monomer. The cofactor is [4Fe-4S] cluster.

The protein localises to the cytoplasm. The enzyme catalyses N(6)-dimethylallyladenosine(37) in tRNA + (sulfur carrier)-SH + AH2 + 2 S-adenosyl-L-methionine = 2-methylsulfanyl-N(6)-dimethylallyladenosine(37) in tRNA + (sulfur carrier)-H + 5'-deoxyadenosine + L-methionine + A + S-adenosyl-L-homocysteine + 2 H(+). Catalyzes the methylthiolation of N6-(dimethylallyl)adenosine (i(6)A), leading to the formation of 2-methylthio-N6-(dimethylallyl)adenosine (ms(2)i(6)A) at position 37 in tRNAs that read codons beginning with uridine. The chain is tRNA-2-methylthio-N(6)-dimethylallyladenosine synthase from Brucella canis (strain ATCC 23365 / NCTC 10854 / RM-666).